The sequence spans 89 residues: UPF0147 protein STK_04605 (89 aa).

The protein belongs to the UPF0147 family.

The chain is UPF0147 protein STK_04605 from Sulfurisphaera tokodaii (strain DSM 16993 / JCM 10545 / NBRC 100140 / 7) (Sulfolobus tokodaii).